The primary structure comprises 303 residues: tRNA pseudouridine synthase B (303 aa).

The active-site Nucleophile is D38.

It belongs to the pseudouridine synthase TruB family. Type 1 subfamily.

It carries out the reaction uridine(55) in tRNA = pseudouridine(55) in tRNA. Responsible for synthesis of pseudouridine from uracil-55 in the psi GC loop of transfer RNAs. This chain is tRNA pseudouridine synthase B, found in Oceanobacillus iheyensis (strain DSM 14371 / CIP 107618 / JCM 11309 / KCTC 3954 / HTE831).